The following is a 125-amino-acid chain: Cu-Zn superoxide dismutase-like protein OPG175 (125 aa).

Residues C52 and C102 are joined by a disulfide bond.

The protein belongs to the Cu-Zn superoxide dismutase family.

It localises to the virion. Its subcellular location is the host cytoplasm. Its function is as follows. Superoxide dismutase-like protein with no enzymatic activity. The protein is Cu-Zn superoxide dismutase-like protein OPG175 (OPG175) of Monkeypox virus.